Here is a 278-residue protein sequence, read N- to C-terminus: MKLVVCSESDTAGQNIKDNLLTFADFEEKDVGEFKLYLSDEFYIAETKERLIYADHIDEKLAKYIDFEEILFASRHSSKDGRKIFTVHVSGNVGTADFGGKPYSLAKPSPQTMKNYVLALRERLDRKPEFEFTMEVTHHGPSEISKPSAFYEIGSTEEEWKDREAAEVVAEAMLDAIRAEKMDWNVAVGVGGTHYAPRQTEIMLTTTFTFGHNFAKYTFEHLTAEFLVKAVKLSEAEYIIIDEKSVNSAVKKIVNEAAEVAGVEVLKSKKVKKDFRLV.

This sequence belongs to the DtdA deacylase family. As to quaternary structure, monomer. The cofactor is Zn(2+).

It carries out the reaction a D-aminoacyl-tRNA + H2O = a tRNA + a D-alpha-amino acid + H(+). The catalysed reaction is glycyl-tRNA(Ala) + H2O = tRNA(Ala) + glycine + H(+). D-aminoacyl-tRNA deacylase with broad substrate specificity. By recycling D-aminoacyl-tRNA to D-amino acids and free tRNA molecules, this enzyme counteracts the toxicity associated with the formation of D-aminoacyl-tRNA entities in vivo. The sequence is that of D-aminoacyl-tRNA deacylase from Archaeoglobus fulgidus (strain ATCC 49558 / DSM 4304 / JCM 9628 / NBRC 100126 / VC-16).